Reading from the N-terminus, the 293-residue chain is Ribosomal RNA small subunit methyltransferase H (293 aa).

S-adenosyl-L-methionine contacts are provided by residues 32–34 (GGH), Asp-51, Phe-78, Asp-99, and Gln-106. The interval 272-293 (SDEEIKENPASRSAKLRVGRRI) is disordered.

It belongs to the methyltransferase superfamily. RsmH family.

The protein resides in the cytoplasm. It catalyses the reaction cytidine(1402) in 16S rRNA + S-adenosyl-L-methionine = N(4)-methylcytidine(1402) in 16S rRNA + S-adenosyl-L-homocysteine + H(+). Specifically methylates the N4 position of cytidine in position 1402 (C1402) of 16S rRNA. The sequence is that of Ribosomal RNA small subunit methyltransferase H from Sulfurihydrogenibium sp. (strain YO3AOP1).